The following is a 283-amino-acid chain: 4-diphosphocytidyl-2-C-methyl-D-erythritol kinase (283 aa).

Residue lysine 12 is part of the active site. 94–104 is an ATP binding site; it reads PAQAGLGGGSS. The active site involves aspartate 136.

The protein belongs to the GHMP kinase family. IspE subfamily.

The catalysed reaction is 4-CDP-2-C-methyl-D-erythritol + ATP = 4-CDP-2-C-methyl-D-erythritol 2-phosphate + ADP + H(+). The protein operates within isoprenoid biosynthesis; isopentenyl diphosphate biosynthesis via DXP pathway; isopentenyl diphosphate from 1-deoxy-D-xylulose 5-phosphate: step 3/6. Its function is as follows. Catalyzes the phosphorylation of the position 2 hydroxy group of 4-diphosphocytidyl-2C-methyl-D-erythritol. This Acidovorax sp. (strain JS42) protein is 4-diphosphocytidyl-2-C-methyl-D-erythritol kinase.